Consider the following 656-residue polypeptide: Chaperone protein DnaK (656 aa).

Disordered regions lie at residues glutamate 488–aspartate 532 and tyrosine 579–glutamate 656. Positions glutamate 492–alanine 513 are enriched in basic and acidic residues. Positions leucine 523–aspartate 532 are enriched in acidic residues. Residues glycine 584 to glycine 635 show a composition bias toward gly residues. A compositionally biased stretch (acidic residues) spans aspartate 636–glutamate 656.

The protein belongs to the heat shock protein 70 family.

In terms of biological role, acts as a chaperone. This chain is Chaperone protein DnaK, found in Natronomonas pharaonis (strain ATCC 35678 / DSM 2160 / CIP 103997 / JCM 8858 / NBRC 14720 / NCIMB 2260 / Gabara) (Halobacterium pharaonis).